Consider the following 321-residue polypeptide: Cytochrome c biogenesis protein CcsA (321 aa).

8 consecutive transmembrane segments (helical) span residues 17–37 (VVSIVITIHLITLLVDEIIGL), 46–63 (MTTFFCITGLLMTRWIYL), 71–91 (LYESLIFLSWSFSIIHMVPYF), 98–118 (LKAITAPSAIFTQGFATSGLL), 143–163 (MVLGYAALLCGSLLSLALLVI), 225–245 (IISLGFIFLTIGILSGAVWAN), 259–273 (TWAFITWTLFSIYLH), and 286–306 (AIVASMGFLIIWICYFGVNLL).

Belongs to the CcmF/CycK/Ccl1/NrfE/CcsA family. May interact with Ccs1.

The protein localises to the plastid. The protein resides in the chloroplast thylakoid membrane. In terms of biological role, required during biogenesis of c-type cytochromes (cytochrome c6 and cytochrome f) at the step of heme attachment. This chain is Cytochrome c biogenesis protein CcsA, found in Morus indica (Mulberry).